A 360-amino-acid polypeptide reads, in one-letter code: UDP-N-acetylglucosamine--N-acetylmuramyl-(pentapeptide) pyrophosphoryl-undecaprenol N-acetylglucosamine transferase (360 aa).

Residues S198 and Q289 each coordinate UDP-N-acetyl-alpha-D-glucosamine.

Belongs to the glycosyltransferase 28 family. MurG subfamily.

The protein resides in the cell membrane. The catalysed reaction is Mur2Ac(oyl-L-Ala-gamma-D-Glu-L-Lys-D-Ala-D-Ala)-di-trans,octa-cis-undecaprenyl diphosphate + UDP-N-acetyl-alpha-D-glucosamine = beta-D-GlcNAc-(1-&gt;4)-Mur2Ac(oyl-L-Ala-gamma-D-Glu-L-Lys-D-Ala-D-Ala)-di-trans,octa-cis-undecaprenyl diphosphate + UDP + H(+). The protein operates within cell wall biogenesis; peptidoglycan biosynthesis. Functionally, cell wall formation. Catalyzes the transfer of a GlcNAc subunit on undecaprenyl-pyrophosphoryl-MurNAc-pentapeptide (lipid intermediate I) to form undecaprenyl-pyrophosphoryl-MurNAc-(pentapeptide)GlcNAc (lipid intermediate II). The protein is UDP-N-acetylglucosamine--N-acetylmuramyl-(pentapeptide) pyrophosphoryl-undecaprenol N-acetylglucosamine transferase of Streptococcus pyogenes serotype M4 (strain MGAS10750).